The primary structure comprises 301 residues: MHLEHLVTEQPNGQSANLDALGIPDALALMNREDAGIAARVAHALPAIASGVTVIADALRAGGRLIYIGAGNSGRIGYLDALECQPTFGTQPGEIIGIVAGGFAGITESVEDSDTLGRQDLDAAGLARGDVVVGLTASGRTPYVLGALRHARDTGCRTIAVACNVGSEAAALADVAIEVDCGPEVLTGSTRLKAGTAQKMICNMLSTISMVALGKTYGNLMVDVQVHNHKLRRRAIGIVSQAAGVPTDVAERALEQAGDRPRIAILMLCAGVDRAGAERLADAAGGSIRKALATLAPSTRA.

Residues Ile-55–Lys-215 enclose the SIS domain. The active-site Proton donor is the Glu-83. The active site involves Glu-111.

Belongs to the GCKR-like family. MurNAc-6-P etherase subfamily. Homodimer.

The enzyme catalyses N-acetyl-D-muramate 6-phosphate + H2O = N-acetyl-D-glucosamine 6-phosphate + (R)-lactate. It participates in amino-sugar metabolism; 1,6-anhydro-N-acetylmuramate degradation. It functions in the pathway amino-sugar metabolism; N-acetylmuramate degradation. Its pathway is cell wall biogenesis; peptidoglycan recycling. Specifically catalyzes the cleavage of the D-lactyl ether substituent of MurNAc 6-phosphate, producing GlcNAc 6-phosphate and D-lactate. Together with AnmK, is also required for the utilization of anhydro-N-acetylmuramic acid (anhMurNAc) either imported from the medium or derived from its own cell wall murein, and thus plays a role in cell wall recycling. This Burkholderia lata (strain ATCC 17760 / DSM 23089 / LMG 22485 / NCIMB 9086 / R18194 / 383) protein is N-acetylmuramic acid 6-phosphate etherase.